The chain runs to 552 residues: Esterase E4 (552 aa).

The N-terminal stretch at 1 to 23 (MKNTCGILLNLFLFIGCFLTCSA) is a signal peptide. Residue Asn81 is glycosylated (N-linked (GlcNAc...) asparagine). Cys89 and Cys106 are disulfide-bonded. Ser214 functions as the Acyl-ester intermediate in the catalytic mechanism. Cys266 and Cys277 are disulfide-bonded. The N-linked (GlcNAc...) asparagine glycan is linked to Asn269. Glu339 functions as the Charge relay system in the catalytic mechanism. N-linked (GlcNAc...) asparagine glycosylation is found at Asn371, Asn404, and Asn443. Residue His463 is the Charge relay system of the active site.

This sequence belongs to the type-B carboxylesterase/lipase family.

It carries out the reaction a carboxylic ester + H2O = an alcohol + a carboxylate + H(+). Overproduction of nonspecific esterases is a common mechanism of resistance to organophosphate insecticides. The sequence is that of Esterase E4 from Myzus persicae (Green peach aphid).